We begin with the raw amino-acid sequence, 481 residues long: DNA gyrase subunit B (481 aa).

The Toprim domain maps to cysteine 323–proline 442. Residues glutamate 329, aspartate 407, and aspartate 409 each coordinate Mg(2+).

This sequence belongs to the type II topoisomerase GyrB family. In terms of assembly, heterotetramer, composed of two GyrA and two GyrB chains. In the heterotetramer, GyrA contains the active site tyrosine that forms a transient covalent intermediate with DNA, while GyrB binds cofactors and catalyzes ATP hydrolysis. Mg(2+) is required as a cofactor. Mn(2+) serves as cofactor. Requires Ca(2+) as cofactor.

Its subcellular location is the cytoplasm. The enzyme catalyses ATP-dependent breakage, passage and rejoining of double-stranded DNA.. In terms of biological role, a type II topoisomerase that negatively supercoils closed circular double-stranded (ds) DNA in an ATP-dependent manner to modulate DNA topology and maintain chromosomes in an underwound state. Negative supercoiling favors strand separation, and DNA replication, transcription, recombination and repair, all of which involve strand separation. Also able to catalyze the interconversion of other topological isomers of dsDNA rings, including catenanes and knotted rings. Type II topoisomerases break and join 2 DNA strands simultaneously in an ATP-dependent manner. The chain is DNA gyrase subunit B (gyrB) from Chitinophaga japonensis (Flexibacter japonensis).